Here is a 172-residue protein sequence, read N- to C-terminus: Adenine phosphoribosyltransferase (172 aa).

It belongs to the purine/pyrimidine phosphoribosyltransferase family. Homodimer.

It localises to the cytoplasm. The enzyme catalyses AMP + diphosphate = 5-phospho-alpha-D-ribose 1-diphosphate + adenine. The protein operates within purine metabolism; AMP biosynthesis via salvage pathway; AMP from adenine: step 1/1. Its function is as follows. Catalyzes a salvage reaction resulting in the formation of AMP, that is energically less costly than de novo synthesis. This chain is Adenine phosphoribosyltransferase, found in Streptococcus pyogenes serotype M12 (strain MGAS9429).